The primary structure comprises 120 residues: UPF0231 protein YacL (120 aa).

The protein belongs to the UPF0231 family.

The sequence is that of UPF0231 protein YacL from Salmonella agona (strain SL483).